The primary structure comprises 207 residues: uncharacterized protein (207 aa).

This sequence belongs to the flavoredoxin family. It depends on FMN as a cofactor.

This is an uncharacterized protein from Bacillus subtilis (strain 168).